Reading from the N-terminus, the 876-residue chain is Leucine--tRNA ligase (876 aa).

Residues 43 to 53 (PYPSGRIHMGH) carry the 'HIGH' region motif. A 'KMSKS' region motif is present at residues 630–634 (KMSKS). K633 contributes to the ATP binding site.

It belongs to the class-I aminoacyl-tRNA synthetase family.

It is found in the cytoplasm. It catalyses the reaction tRNA(Leu) + L-leucine + ATP = L-leucyl-tRNA(Leu) + AMP + diphosphate. The chain is Leucine--tRNA ligase from Methylocella silvestris (strain DSM 15510 / CIP 108128 / LMG 27833 / NCIMB 13906 / BL2).